The chain runs to 187 residues: UPF0340 protein SPN23F05980 (187 aa).

The protein belongs to the UPF0340 family.

The sequence is that of UPF0340 protein SPN23F05980 from Streptococcus pneumoniae (strain ATCC 700669 / Spain 23F-1).